A 415-amino-acid chain; its full sequence is Casein kinase I isoform delta (415 aa).

The 269-residue stretch at 9 to 277 folds into the Protein kinase domain; sequence YRLGRKIGSG…YLRQLFRNLF (269 aa). Residues 15–23 and Lys38 each bind ATP; that span reads IGSGSFGDI. Asp128 acts as the Proton acceptor in catalysis. The interval 278 to 364 is centrosomal localization signal (CLS); sequence HRQGFSYDYV…TSPRPVSGME (87 aa). Basic and acidic residues predominate over residues 301-315; it reads ADDAERERRDREERL. The interval 301-415 is disordered; the sequence is ADDAERERRD…SSGLQSVVHR (115 aa). The segment at 317–342 is autoinhibitory; that stretch reads HSRNPATRGLPSTASGRLRGTQEVAP. Phosphoserine is present on residues Ser328 and Ser331. Residues 347–358 show a composition bias toward polar residues; the sequence is TPTSHTANTSPR. Ser370 is modified (phosphoserine). Arg375 is modified (omega-N-methylarginine). A compositionally biased stretch (polar residues) spans 380-400; the sequence is NISSSDLTGRQDTSRMSTSQI. Ser382, Ser383, Ser384, Ser407, and Ser411 each carry phosphoserine.

It belongs to the protein kinase superfamily. CK1 Ser/Thr protein kinase family. Casein kinase I subfamily. Monomer. Component of the circadian core oscillator, which includes the CRY proteins, CLOCK, or NPAS2, ARTNL/BMAL1 or ARTNL2/BMAL2, CSNK1D and/or CSNK1E, TIMELESS and the PER proteins. Interacts with DNMT1 and MAP1A. Interacts directly with PER1 and PER2 which may lead to their degradation. Interacts with MAPT/TAU, SNAPIN, DBNDD2, AIB1/NCOA3 and ESR1. Interacts with AKAP9/AKAP450; this interaction promotes centrosomal subcellular location. Binds to tubulins in mitotic cells upon DNA damage. Interacts with GJA1. Interacts with DDX3X; this interaction enhances CSNK1D kinase activity in vitro, but it is unclear whether this interaction is physiologically relevant. Interacts with FAM83A, FAM83B, FAM83E and FAM83H (via DUF1669). Post-translationally, autophosphorylated on serine and threonine residues; this autophosphorylation represses activity. Reactivated by phosphatase-mediated dephosphorylation. May be dephosphorylated by PP1.

It localises to the cytoplasm. The protein resides in the nucleus. It is found in the cytoskeleton. Its subcellular location is the microtubule organizing center. The protein localises to the centrosome. It localises to the perinuclear region. The protein resides in the cell membrane. It is found in the spindle. Its subcellular location is the golgi apparatus. It carries out the reaction L-seryl-[protein] + ATP = O-phospho-L-seryl-[protein] + ADP + H(+). The catalysed reaction is L-threonyl-[protein] + ATP = O-phospho-L-threonyl-[protein] + ADP + H(+). The enzyme catalyses L-seryl-[tau protein] + ATP = O-phospho-L-seryl-[tau protein] + ADP + H(+). It catalyses the reaction L-threonyl-[tau protein] + ATP = O-phospho-L-threonyl-[tau protein] + ADP + H(+). Its activity is regulated as follows. Exhibits substrate-dependent heparin activation. Drug-mediated inhibition leads to a delay of the oscillations with the magnitude of this effect dependent upon the timing of drug administration. Inhibited by phosphorylation. Essential serine/threonine-protein kinase that regulates diverse cellular growth and survival processes including Wnt signaling, DNA repair and circadian rhythms. It can phosphorylate a large number of proteins. Casein kinases are operationally defined by their preferential utilization of acidic proteins such as caseins as substrates. Phosphorylates connexin-43/GJA1, MAP1A, SNAPIN, MAPT/TAU, TOP2A, DCK, HIF1A, EIF6, p53/TP53, DVL2, DVL3, ESR1, AIB1/NCOA3, DNMT1, PKD2, YAP1, PER1 and PER2. Central component of the circadian clock. In balance with PP1, determines the circadian period length through the regulation of the speed and rhythmicity of PER1 and PER2 phosphorylation. Controls PER1 and PER2 nuclear transport and degradation. YAP1 phosphorylation promotes its SCF(beta-TRCP) E3 ubiquitin ligase-mediated ubiquitination and subsequent degradation. DNMT1 phosphorylation reduces its DNA-binding activity. Phosphorylation of ESR1 and AIB1/NCOA3 stimulates their activity and coactivation. Phosphorylation of DVL2 and DVL3 regulates WNT3A signaling pathway that controls neurite outgrowth. Phosphorylates NEDD9/HEF1. EIF6 phosphorylation promotes its nuclear export. Triggers down-regulation of dopamine receptors in the forebrain. Activates DCK in vitro by phosphorylation. TOP2A phosphorylation favors DNA cleavable complex formation. May regulate the formation of the mitotic spindle apparatus in extravillous trophoblast. Modulates connexin-43/GJA1 gap junction assembly by phosphorylation. Probably involved in lymphocyte physiology. Regulates fast synaptic transmission mediated by glutamate. In Pongo abelii (Sumatran orangutan), this protein is Casein kinase I isoform delta (CSNK1D).